Consider the following 178-residue polypeptide: Cytochrome b6-f complex iron-sulfur subunit (178 aa).

Residues leucine 20 to methionine 42 traverse the membrane as a helical segment. The 97-residue stretch at lysine 65–valine 161 folds into the Rieske domain. Residues cysteine 107, histidine 109, cysteine 125, and histidine 128 each contribute to the [2Fe-2S] cluster site. An intrachain disulfide couples cysteine 112 to cysteine 127.

The protein belongs to the Rieske iron-sulfur protein family. The 4 large subunits of the cytochrome b6-f complex are cytochrome b6, subunit IV (17 kDa polypeptide, PetD), cytochrome f and the Rieske protein, while the 4 small subunits are PetG, PetL, PetM and PetN. The complex functions as a dimer. It depends on [2Fe-2S] cluster as a cofactor.

It is found in the cellular thylakoid membrane. The enzyme catalyses 2 oxidized [plastocyanin] + a plastoquinol + 2 H(+)(in) = 2 reduced [plastocyanin] + a plastoquinone + 4 H(+)(out). Functionally, component of the cytochrome b6-f complex, which mediates electron transfer between photosystem II (PSII) and photosystem I (PSI), cyclic electron flow around PSI, and state transitions. This chain is Cytochrome b6-f complex iron-sulfur subunit, found in Prochlorococcus marinus (strain MIT 9215).